The chain runs to 293 residues: Protein bcp-1 (293 aa).

Residues 1–12 are compositionally biased toward basic and acidic residues; that stretch reads MGKKRSREEAQK. The disordered stretch occupies residues 1–35; that stretch reads MGKKRSREEAQKEVVQNDPTVDKMDEDSDSSDSDE. A compositionally biased stretch (acidic residues) spans 24 to 35; that stretch reads MDEDSDSSDSDE.

Belongs to the BCP1 family.

The protein resides in the cytoplasm. Its subcellular location is the nucleus. Functionally, involved in nuclear export, actin cytoskeleton organization and vesicular transport. The protein is Protein bcp-1 (bcp-1) of Neurospora crassa (strain ATCC 24698 / 74-OR23-1A / CBS 708.71 / DSM 1257 / FGSC 987).